A 120-amino-acid polypeptide reads, in one-letter code: Large ribosomal subunit protein uL18 (120 aa).

This sequence belongs to the universal ribosomal protein uL18 family. As to quaternary structure, part of the 50S ribosomal subunit; part of the 5S rRNA/L5/L18/L25 subcomplex. Contacts the 5S and 23S rRNAs.

In terms of biological role, this is one of the proteins that bind and probably mediate the attachment of the 5S RNA into the large ribosomal subunit, where it forms part of the central protuberance. In Geobacillus sp. (strain WCH70), this protein is Large ribosomal subunit protein uL18.